The sequence spans 212 residues: Cytidylate kinase (212 aa).

An ATP-binding site is contributed by 7–15 (GPAASGKGT).

It belongs to the cytidylate kinase family. Type 1 subfamily.

The protein resides in the cytoplasm. The enzyme catalyses CMP + ATP = CDP + ADP. It carries out the reaction dCMP + ATP = dCDP + ADP. The chain is Cytidylate kinase from Nitrobacter winogradskyi (strain ATCC 25391 / DSM 10237 / CIP 104748 / NCIMB 11846 / Nb-255).